We begin with the raw amino-acid sequence, 653 residues long: DNA ligase (653 aa).

Residues 32–36 (NFEYD) and 80–81 (SL) contribute to the NAD(+) site. The active-site N6-AMP-lysine intermediate is the lysine 104. Residues arginine 125, glutamate 159, and lysine 297 each contribute to the NAD(+) site. Zn(2+) contacts are provided by cysteine 386, cysteine 389, cysteine 406, and cysteine 411. In terms of domain architecture, BRCT spans 571 to 653 (GGSEKLKGLT…EEFIQLLNEA (83 aa)).

It belongs to the NAD-dependent DNA ligase family. LigA subfamily. Mg(2+) serves as cofactor. Mn(2+) is required as a cofactor.

It carries out the reaction NAD(+) + (deoxyribonucleotide)n-3'-hydroxyl + 5'-phospho-(deoxyribonucleotide)m = (deoxyribonucleotide)n+m + AMP + beta-nicotinamide D-nucleotide.. Its function is as follows. DNA ligase that catalyzes the formation of phosphodiester linkages between 5'-phosphoryl and 3'-hydroxyl groups in double-stranded DNA using NAD as a coenzyme and as the energy source for the reaction. It is essential for DNA replication and repair of damaged DNA. The chain is DNA ligase from Lachnoclostridium phytofermentans (strain ATCC 700394 / DSM 18823 / ISDg) (Clostridium phytofermentans).